Consider the following 155-residue polypeptide: Small ribosomal subunit protein uS7 (155 aa).

The protein belongs to the universal ribosomal protein uS7 family. Part of the 30S ribosomal subunit. Contacts proteins S9 and S11.

One of the primary rRNA binding proteins, it binds directly to 16S rRNA where it nucleates assembly of the head domain of the 30S subunit. Is located at the subunit interface close to the decoding center, probably blocks exit of the E-site tRNA. The chain is Small ribosomal subunit protein uS7 from Thermosipho melanesiensis (strain DSM 12029 / CIP 104789 / BI429).